The primary structure comprises 345 residues: MPSPFPRRRCLPGDFSPSVDSRPCSSPCELPGPTGKLFLGGTPPRALRLPRRLAWCSIDWEQVCLLQRLGAGGFGSVYKATYHGVPVAIKQVSRCTKNRLASQRSFWAELNIARLRHANIVRVVAASTRTPAAFDSLGSIIMEFGGNVTLHQVIYGATGCPEEDGPPCSAGEQLNLEKCLKYSLDVVSGLLFLHSQGIVHLDLKPANILISEQDVCKISDFGCSERLEDLRFRPRHHLGGTYTHRAPELLKGEPVTPKADIYSFAITLWQMTTRQVPYSGERQHVLYAVVAYNLRPSLSAAVFTESVPGKKLEDIIQCGWTAPAQQRPSAQLLLLDLRALQAELG.

A Protein kinase domain is found at 63–344 (VCLLQRLGAG…LDLRALQAEL (282 aa)). ATP-binding positions include 69-77 (LGAGGFGSV) and lysine 90. Aspartate 202 serves as the catalytic Proton acceptor.

This sequence belongs to the protein kinase superfamily. Ser/Thr protein kinase family. Interacts with MAP2K1/MEK1. As to expression, restricted to gonadal tissues.

Its subcellular location is the cytoplasm. It carries out the reaction L-seryl-[protein] + ATP = O-phospho-L-seryl-[protein] + ADP + H(+). The catalysed reaction is L-threonyl-[protein] + ATP = O-phospho-L-threonyl-[protein] + ADP + H(+). Its function is as follows. Serine/threonine kinase involved in the regulation of MAPK signaling. Is an activator of the ERK1/2 signaling cascade playing an essential role in the stimulation of oocyte maturation. The chain is Proto-oncogene serine/threonine-protein kinase mos from Sus scrofa (Pig).